The sequence spans 575 residues: Putative diflavin flavoprotein A 4 (575 aa).

The tract at residues 41 to 234 (QRGTTANSYL…LGARSYAPGH (194 aa)) is zinc metallo-hydrolase. In terms of domain architecture, Flavodoxin-like spans 263–405 (VALLYTSAYG…AGATFAQTLK (143 aa)). The tract at residues 429-575 (VGRIIGSLCV…AVEHRKSGSH (147 aa)) is flavodoxin-reductase-like.

This sequence in the N-terminal section; belongs to the zinc metallo-hydrolase group 3 family. It in the C-terminal section; belongs to the flavodoxin reductase family. It depends on Fe cation as a cofactor.

Mediates electron transfer from NADH to oxygen, reducing it to water. This modular protein has 3 redox cofactors, in other organisms the same activity requires 2 or 3 proteins. In Nostoc sp. (strain PCC 7120 / SAG 25.82 / UTEX 2576), this protein is Putative diflavin flavoprotein A 4 (dfa4).